The following is a 1192-amino-acid chain: Probable ATP-binding protein BrxC (1192 aa).

Belongs to the BrxC family.

Functionally, BREX systems (bacteriophage exclusion) provide immunity against bacteriophage. A core protein of a type 1 BREX system. This system allows phage adsorption but prevents phage DNA replication, without degradation of the phage DNA. Methylation of bacterial DNA by PglX probably guides self/non-self discrimination. When the brxA-brxB-brxC-pglX and pglZ-brxL operons are transformed into a susceptible B.subtilis strain (BEST7003) they confer resistance to bacteriophages SPbeta, SP16, Zeta, phi3T and SP02 and partial protection to phages SP01 and SP82G (these include lytic and temperate phage). They do not protect against phages phi105, rho10 or rho14. Additionally confers a very slight reduction in efficiency of plasmid transformation. The chain is Probable ATP-binding protein BrxC from Bacillus cereus (strain H3081.97).